We begin with the raw amino-acid sequence, 346 residues long: Elongation factor Ts (346 aa).

Residues 80–83 (TDFV) are involved in Mg(2+) ion dislocation from EF-Tu.

The protein belongs to the EF-Ts family.

It localises to the cytoplasm. In terms of biological role, associates with the EF-Tu.GDP complex and induces the exchange of GDP to GTP. It remains bound to the aminoacyl-tRNA.EF-Tu.GTP complex up to the GTP hydrolysis stage on the ribosome. This is Elongation factor Ts from Streptococcus pyogenes serotype M1.